We begin with the raw amino-acid sequence, 65 residues long: Ovary maturating parsin (65 aa).

A compositionally biased stretch (low complexity) spans 17 to 28 (PAAPAVAPAAPA). A disordered region spans residues 17 to 36 (PAAPAVAPAAPASWPHQQRR).

As to quaternary structure, monomer.

In terms of biological role, neurohormone that anticipates ovarian maturation. Acts as a true gonadotropin and stimulates vitellogenin biosynthesis. The chain is Ovary maturating parsin from Locusta migratoria (Migratory locust).